Reading from the N-terminus, the 736-residue chain is 1,4-alpha-glucan branching enzyme GlgB 2 (736 aa).

The active-site Nucleophile is the D415. E468 acts as the Proton donor in catalysis.

Belongs to the glycosyl hydrolase 13 family. GlgB subfamily. Monomer.

It carries out the reaction Transfers a segment of a (1-&gt;4)-alpha-D-glucan chain to a primary hydroxy group in a similar glucan chain.. It participates in glycan biosynthesis; glycogen biosynthesis. Catalyzes the formation of the alpha-1,6-glucosidic linkages in glycogen by scission of a 1,4-alpha-linked oligosaccharide from growing alpha-1,4-glucan chains and the subsequent attachment of the oligosaccharide to the alpha-1,6 position. The sequence is that of 1,4-alpha-glucan branching enzyme GlgB 2 from Rhizobium johnstonii (strain DSM 114642 / LMG 32736 / 3841) (Rhizobium leguminosarum bv. viciae).